The primary structure comprises 234 residues: Triosephosphate isomerase (234 aa).

8-10 (NFK) serves as a coordination point for substrate. H90 functions as the Electrophile in the catalytic mechanism. Catalysis depends on E159, which acts as the Proton acceptor. Positions 165 and 197 each coordinate substrate.

The protein belongs to the triosephosphate isomerase family. Homodimer.

The protein resides in the cytoplasm. It carries out the reaction D-glyceraldehyde 3-phosphate = dihydroxyacetone phosphate. It functions in the pathway carbohydrate biosynthesis; gluconeogenesis. It participates in carbohydrate degradation; glycolysis; D-glyceraldehyde 3-phosphate from glycerone phosphate: step 1/1. In terms of biological role, involved in the gluconeogenesis. Catalyzes stereospecifically the conversion of dihydroxyacetone phosphate (DHAP) to D-glyceraldehyde-3-phosphate (G3P). The chain is Triosephosphate isomerase from Helicobacter pylori (strain Shi470).